Reading from the N-terminus, the 108-residue chain is Large ribosomal subunit protein bL21 (108 aa).

The protein belongs to the bacterial ribosomal protein bL21 family. As to quaternary structure, part of the 50S ribosomal subunit. Contacts protein L20.

Its function is as follows. This protein binds to 23S rRNA in the presence of protein L20. The chain is Large ribosomal subunit protein bL21 from Buchnera aphidicola subsp. Acyrthosiphon pisum (strain 5A).